A 156-amino-acid polypeptide reads, in one-letter code: MNINATLFAQIIVFFGLVWFTMKFVWPPIAKALDERAAKIAEGLAAAERGKSDFEQAEKKVAELLAEGRNQVSEMVANAEKRAAKIVEEAKEQASSEAARIAAQAKADVEQELFRARESLRDQVAVLAVKGAESILRSEVDASKHAKLLDTLKQEL.

A helical transmembrane segment spans residues 7–27 (LFAQIIVFFGLVWFTMKFVWP).

This sequence belongs to the ATPase B chain family. As to quaternary structure, F-type ATPases have 2 components, F(1) - the catalytic core - and F(0) - the membrane proton channel. F(1) has five subunits: alpha(3), beta(3), gamma(1), delta(1), epsilon(1). F(0) has three main subunits: a(1), b(2) and c(10-14). The alpha and beta chains form an alternating ring which encloses part of the gamma chain. F(1) is attached to F(0) by a central stalk formed by the gamma and epsilon chains, while a peripheral stalk is formed by the delta and b chains.

Its subcellular location is the cell inner membrane. Its function is as follows. F(1)F(0) ATP synthase produces ATP from ADP in the presence of a proton or sodium gradient. F-type ATPases consist of two structural domains, F(1) containing the extramembraneous catalytic core and F(0) containing the membrane proton channel, linked together by a central stalk and a peripheral stalk. During catalysis, ATP synthesis in the catalytic domain of F(1) is coupled via a rotary mechanism of the central stalk subunits to proton translocation. Functionally, component of the F(0) channel, it forms part of the peripheral stalk, linking F(1) to F(0). The protein is ATP synthase subunit b of Neisseria gonorrhoeae (strain NCCP11945).